The sequence spans 103 residues: Small ribosomal subunit protein uS10 (103 aa).

Belongs to the universal ribosomal protein uS10 family. As to quaternary structure, part of the 30S ribosomal subunit.

Involved in the binding of tRNA to the ribosomes. The chain is Small ribosomal subunit protein uS10 from Haemophilus ducreyi (strain 35000HP / ATCC 700724).